The chain runs to 257 residues: Glutamate racemase (257 aa).

Substrate is bound by residues 12–13 (DS) and 44–45 (YG). The active-site Proton donor/acceptor is cysteine 75. 76 to 77 (NT) is a substrate binding site. Cysteine 186 functions as the Proton donor/acceptor in the catalytic mechanism. 187 to 188 (TH) contributes to the substrate binding site.

It belongs to the aspartate/glutamate racemases family.

It carries out the reaction L-glutamate = D-glutamate. The protein operates within cell wall biogenesis; peptidoglycan biosynthesis. Provides the (R)-glutamate required for cell wall biosynthesis. This chain is Glutamate racemase, found in Clostridium kluyveri (strain NBRC 12016).